Reading from the N-terminus, the 107-residue chain is Integration host factor subunit beta (107 aa).

Residues 82–101 (PGKELRERVDRRAGEPLKAE) are compositionally biased toward basic and acidic residues. A disordered region spans residues 82-107 (PGKELRERVDRRAGEPLKAEEPDDDL).

Belongs to the bacterial histone-like protein family. In terms of assembly, heterodimer of an alpha and a beta chain.

This protein is one of the two subunits of integration host factor, a specific DNA-binding protein that functions in genetic recombination as well as in transcriptional and translational control. The chain is Integration host factor subunit beta from Paraburkholderia phytofirmans (strain DSM 17436 / LMG 22146 / PsJN) (Burkholderia phytofirmans).